We begin with the raw amino-acid sequence, 157 residues long: AP-1 complex subunit sigma-2 (157 aa).

The protein belongs to the adaptor complexes small subunit family. Adaptor protein complex 1 (AP-1) is a heterotetramer composed of two large adaptins (gamma-type subunit AP1G1 and beta-type subunit AP1B1), a medium adaptin (mu-type subunit AP1M1 or AP1M2) and a small adaptin (sigma-type subunit AP1S1 or AP1S2 or AP1S3). Binds to MUC1. In terms of tissue distribution, widely expressed.

The protein localises to the golgi apparatus. Its subcellular location is the cytoplasmic vesicle membrane. The protein resides in the membrane. It is found in the clathrin-coated pit. In terms of biological role, subunit of clathrin-associated adaptor protein complex 1 that plays a role in protein sorting in the late-Golgi/trans-Golgi network (TGN) and/or endosomes. The AP complexes mediate both the recruitment of clathrin to membranes and the recognition of sorting signals within the cytosolic tails of transmembrane cargo molecules. This chain is AP-1 complex subunit sigma-2 (AP1S2), found in Homo sapiens (Human).